The following is a 753-amino-acid chain: MDVNPTLLFLKVPVQNAISTTFPYTGDPPYSHGTGTGYTMDTVNRTHQYSEKGKWTTNTETGAPQLNPIDGPLPEDNEPSGYAQTDCVLEAMAFLEESHPGIFENSCLETMEIVQQTRVDKLTQGRQTYDWTLNRNQPAATALANTIEIFRSNGLTANESGRLIDFLKDVMESMDKEEMEITTHFQRKRRVRDNMTKKMVTQRTIGKKKQRLNKKSYLIRALTLNTMTKDAERGKLKRRAIATPGMQIRGFVYFVETLARSICEKLEQSGLPVGGNEKKAKLANVVRKMMTNSQDTELSFTITGDNTKWNENQNPRMFLAMITYITRNQPEWFRNVLSIAPIMFSNKMARLGKGYMFESKSMKLRTQIPAEMLANIDLKYFNELTKKKIEKIRPLLIDGTASLSPGMMMGMFNMLSTVLGVSILNLGQKRYTKTTYWWDGLQSSDDFALIVNAPNHEGIQAGVDRFYRTCKLVGINMSKKKSYINRTGTFEFTSFFYRYGFVANFRMELPSFGVSGINESADMSIGVTVIKNNMINNDLGPATAQMALQLFIKDYRYTYRCHRGDTQIQTRRSFELKKLWEQTRSKAGLLVSDGGPNLYNIRNLHIPEVCLKWELMDEDYQGRLCNPLNPFVSHKEIESVNNAVVMPAHGPAKSMEYDAVATTHSWIPKRNRSILNTSQRGILEDEQMYQKCCNLFEKFFPSSSYRRPVGISSMVEAMVSRARIDARIDFESGRIKKEEFAEIMKICSTIEEL.

The disordered stretch occupies residues 52–82 (KGKWTTNTETGAPQLNPIDGPLPEDNEPSGY). A compositionally biased stretch (polar residues) spans 55-64 (WTTNTETGAP). 2 consecutive short sequence motifs (nuclear localization signal) follow at residues 187 to 195 (RKRRVRDNM) and 203 to 216 (RTIG…NKKS). The segment at 249-256 (RGFVYFVE) is promoter-binding site. Positions 286 to 483 (VRKMMTNSQD…GINMSKKKSY (198 aa)) constitute a RdRp catalytic domain.

It belongs to the influenza viruses polymerase PB1 family. As to quaternary structure, influenza RNA polymerase is composed of three subunits: PB1, PB2 and PA. Interacts (via N-terminus) with PA (via C-terminus). Interacts (via C-terminus) with PB2 (via N-terminus); this interaction is essential for transcription initiation. Phosphorylated by host PRKCA.

It is found in the host nucleus. The protein resides in the host cytoplasm. The enzyme catalyses RNA(n) + a ribonucleoside 5'-triphosphate = RNA(n+1) + diphosphate. Functionally, RNA-dependent RNA polymerase which is responsible for replication and transcription of virus RNA segments. The transcription of viral mRNAs occurs by a unique mechanism called cap-snatching. 5' methylated caps of cellular mRNAs are cleaved after 10-13 nucleotides by PA. In turn, these short capped RNAs are used as primers by PB1 for transcription of viral mRNAs. During virus replication, PB1 initiates RNA synthesis and copy vRNA into complementary RNA (cRNA) which in turn serves as a template for the production of more vRNAs. This Influenza A virus (strain A/Chicken/Hong Kong/96.1/2002 H5N1 genotype Y) protein is RNA-directed RNA polymerase catalytic subunit.